A 219-amino-acid chain; its full sequence is Ras-related protein Rab-32A (219 aa).

A GTP-binding site is contributed by 22-29 (GDIGTGKT). Residues 44–52 (YKSTIGVDF) carry the Effector region motif. GTP-binding positions include 71–75 (DIAGQ) and 134–137 (NKCD). The segment at 192–219 (NQPIEGTIQPGDLNKQPQPTSTGPSCCK) is disordered. Over residues 206 to 219 (KQPQPTSTGPSCCK) the composition is skewed to polar residues. Residues Cys-217 and Cys-218 are each lipidated (S-geranylgeranyl cysteine).

This sequence belongs to the small GTPase superfamily. Rab family.

This Dictyostelium discoideum (Social amoeba) protein is Ras-related protein Rab-32A (rab32A).